The chain runs to 454 residues: Tubulin alpha chain (454 aa).

Positions 12, 72, 141, 145, 146, 180, 207, and 229 each coordinate GTP. Residue Asp-72 participates in Mg(2+) binding. Glu-255 is an active-site residue.

It belongs to the tubulin family. Dimer of alpha and beta chains. A typical microtubule is a hollow water-filled tube with an outer diameter of 25 nm and an inner diameter of 15 nM. Alpha-beta heterodimers associate head-to-tail to form protofilaments running lengthwise along the microtubule wall with the beta-tubulin subunit facing the microtubule plus end conferring a structural polarity. Microtubules usually have 13 protofilaments but different protofilament numbers can be found in some organisms and specialized cells. Requires Mg(2+) as cofactor.

The protein localises to the cytoplasm. It localises to the cytoskeleton. It catalyses the reaction GTP + H2O = GDP + phosphate + H(+). Tubulin is the major constituent of microtubules, a cylinder consisting of laterally associated linear protofilaments composed of alpha- and beta-tubulin heterodimers. Microtubules grow by the addition of GTP-tubulin dimers to the microtubule end, where a stabilizing cap forms. Below the cap, tubulin dimers are in GDP-bound state, owing to GTPase activity of alpha-tubulin. The sequence is that of Tubulin alpha chain (TUB1) from Colletotrichum orbiculare (strain 104-T / ATCC 96160 / CBS 514.97 / LARS 414 / MAFF 240422) (Cucumber anthracnose fungus).